A 139-amino-acid chain; its full sequence is Putative pre-16S rRNA nuclease (139 aa).

The protein belongs to the YqgF nuclease family.

It is found in the cytoplasm. In terms of biological role, could be a nuclease involved in processing of the 5'-end of pre-16S rRNA. The chain is Putative pre-16S rRNA nuclease from Streptococcus pyogenes serotype M3 (strain ATCC BAA-595 / MGAS315).